The chain runs to 76 residues: Serine proteinase inhibitor IA-2 (76 aa).

Position 1 is an N-acetylserine (serine 1).

The protein belongs to the protease inhibitor I9 family.

In terms of biological role, specifically inhibits an intracellular serine proteinase (proteinase A). This Pleurotus ostreatus (Oyster mushroom) protein is Serine proteinase inhibitor IA-2.